We begin with the raw amino-acid sequence, 182 residues long: Triplatin (182 aa).

A signal peptide spans Met-1–Ala-18. Intrachain disulfides connect Cys-21-Cys-133, Cys-55-Cys-177, and Cys-88-Cys-105.

This sequence belongs to the calycin superfamily. Triabin family. In terms of tissue distribution, expressed in salivary glands.

Its subcellular location is the secreted. Inhibits platelet aggregation and vasoconstriction through binding to distinct eicosanoids involved in inflammation (acts as a scavenger), and has a role in inhibiting host innate immunity by impairing platelet-assisted formation of neutrophil extracellular traps (NETs). Inhibits platelet aggregation by collagen, and low doses of thromboxane A2 mimetic (TXA2 mimetic), and arachidonic acid (AA) without affecting aggregation induced by ADP, convulxin (GP6 agonist), and PMA. Binds to TXA2, TXB2, prostaglandine H2 mimetic (PGH2 mimetic), PGJ2, and PGF2alpha. Binding is not observed to leukotrienes, AA, and biogenic amines (PGE1, 5(S)-HETE, 12(S)-HETE, 20-HETE, norepinephrine, epinephrine, serotonin, LTC4 and ADP). Induces relaxation of aorta rat previously contracted with TXA2 mimetic. Moreover, it also impairs platelet-assisted formation of neutrophil extracellular traps (NETs). NETs are web-like structures of DNA and proteins that play an important role in killing of pathogens. In addition, NETs are implicated in thrombus formation. In vivo, this protein exhibits antithrombotic activity in two distinct mice models that are highly dependent on platelets. It is noteworthy that it inhibits thrombosis without promoting excessive bleeding. This Triatoma infestans (Assassin bug) protein is Triplatin.